Reading from the N-terminus, the 375-residue chain is Chaperone protein DnaJ (375 aa).

Residues 5–70 (DFYETLGVAK…QKRAAYDRYG (66 aa)) enclose the J domain. A CR-type zinc finger spans residues 136–214 (GKTAQIRVPT…CHGQGRVTEE (79 aa)). 8 residues coordinate Zn(2+): Cys149, Cys152, Cys166, Cys169, Cys188, Cys191, Cys202, and Cys205. 4 CXXCXGXG motif repeats span residues 149-156 (CDVCSGSG), 166-173 (CGTCQGTG), 188-195 (CPTCHGRG), and 202-209 (CPKCHGQG).

Belongs to the DnaJ family. In terms of assembly, homodimer. The cofactor is Zn(2+).

It is found in the cytoplasm. Participates actively in the response to hyperosmotic and heat shock by preventing the aggregation of stress-denatured proteins and by disaggregating proteins, also in an autonomous, DnaK-independent fashion. Unfolded proteins bind initially to DnaJ; upon interaction with the DnaJ-bound protein, DnaK hydrolyzes its bound ATP, resulting in the formation of a stable complex. GrpE releases ADP from DnaK; ATP binding to DnaK triggers the release of the substrate protein, thus completing the reaction cycle. Several rounds of ATP-dependent interactions between DnaJ, DnaK and GrpE are required for fully efficient folding. Also involved, together with DnaK and GrpE, in the DNA replication of plasmids through activation of initiation proteins. The sequence is that of Chaperone protein DnaJ from Rhizobium etli (strain ATCC 51251 / DSM 11541 / JCM 21823 / NBRC 15573 / CFN 42).